A 330-amino-acid polypeptide reads, in one-letter code: tRNA-modifying protein YgfZ (330 aa).

The folate site is built by tryptophan 28 and tryptophan 192.

This sequence belongs to the tRNA-modifying YgfZ family.

The protein resides in the cytoplasm. In terms of biological role, folate-binding protein involved in regulating the level of ATP-DnaA and in the modification of some tRNAs. It is probably a key factor in regulatory networks that act via tRNA modification, such as initiation of chromosomal replication. This Blochmanniella pennsylvanica (strain BPEN) protein is tRNA-modifying protein YgfZ.